A 317-amino-acid chain; its full sequence is Melanocyte-stimulating hormone receptor (317 aa).

Residues 1 to 23 (MSGQGPQRRLLGSPNATSPTTPH) are disordered. Topologically, residues 1-37 (MSGQGPQRRLLGSPNATSPTTPHFKLAANQTGPRCLE) are extracellular. A glycan (N-linked (GlcNAc...) asparagine) is linked at N29. The chain crosses the membrane as a helical span at residues 38–63 (VSIPNGLFLSLGLVSVVENVLVVAAI). At 64–72 (AKNRNLHSP) the chain is on the cytoplasmic side. The chain crosses the membrane as a helical span at residues 73 to 93 (MYYFIGCLAVSDLLVSVTNVL). Topologically, residues 94–118 (ETAVMLLVEAGALAAQAAVVQQLDD) are extracellular. Residues 119–140 (IIDVLICGSMVSSLCFLGAIAV) traverse the membrane as a helical segment. Residues 141–163 (DRYLSIFYALRYHSIVTLPRAWR) lie on the Cytoplasmic side of the membrane. The helical transmembrane segment at 164–183 (AISAIWVASVLSSTLFIAYY) threads the bilayer. The Extracellular segment spans residues 184–191 (NHTAVLLC). The helical transmembrane segment at 192–211 (LVSFFVAMLVLMAVLYVHML) threads the bilayer. At 212-240 (ARARQHARGIARLRKRQHSVHQGFGLKGA) the chain is on the cytoplasmic side. A helical transmembrane segment spans residues 241–266 (ATLTILLGIFFLCWGPFFLHLSLMVL). Residues 267–279 (CPQHPICGCVFQN) lie on the Extracellular side of the membrane. The chain crosses the membrane as a helical span at residues 280 to 300 (FNLFLTLIICNSIIDPFIYAF). At 301–317 (RSQELRKTLQEVVLCSW) the chain is on the cytoplasmic side. A lipid anchor (S-palmitoyl cysteine) is attached at C315.

The protein belongs to the G-protein coupled receptor 1 family. As to quaternary structure, interacts with MGRN1, but does not undergo MGRN1-mediated ubiquitination; this interaction competes with GNAS-binding and thus inhibits agonist-induced cAMP production. Interacts with OPN3; the interaction results in a decrease in MC1R-mediated cAMP signaling and ultimately a decrease in melanin production in melanocytes.

It is found in the cell membrane. Receptor for MSH (alpha, beta and gamma) and ACTH. The activity of this receptor is mediated by G proteins which activate adenylate cyclase. Mediates melanogenesis, the production of eumelanin (black/brown) and phaeomelanin (red/yellow), via regulation of cAMP signaling in melanocytes. This Vulpes vulpes (Red fox) protein is Melanocyte-stimulating hormone receptor (MC1R).